A 243-amino-acid polypeptide reads, in one-letter code: 4-hydroxy-tetrahydrodipicolinate reductase (243 aa).

Residues 9–14 (GANGKM), 78–80 (GTS), and 104–107 (APNF) each bind NAD(+). His-134 functions as the Proton donor/acceptor in the catalytic mechanism. Position 135 (His-135) interacts with (S)-2,3,4,5-tetrahydrodipicolinate. Catalysis depends on Lys-138, which acts as the Proton donor. Residue 144 to 145 (GT) coordinates (S)-2,3,4,5-tetrahydrodipicolinate.

The protein belongs to the DapB family.

Its subcellular location is the cytoplasm. The enzyme catalyses (S)-2,3,4,5-tetrahydrodipicolinate + NAD(+) + H2O = (2S,4S)-4-hydroxy-2,3,4,5-tetrahydrodipicolinate + NADH + H(+). It catalyses the reaction (S)-2,3,4,5-tetrahydrodipicolinate + NADP(+) + H2O = (2S,4S)-4-hydroxy-2,3,4,5-tetrahydrodipicolinate + NADPH + H(+). It functions in the pathway amino-acid biosynthesis; L-lysine biosynthesis via DAP pathway; (S)-tetrahydrodipicolinate from L-aspartate: step 4/4. Its function is as follows. Catalyzes the conversion of 4-hydroxy-tetrahydrodipicolinate (HTPA) to tetrahydrodipicolinate. The sequence is that of 4-hydroxy-tetrahydrodipicolinate reductase from Legionella pneumophila (strain Lens).